The following is a 553-amino-acid chain: Putative transport protein YidE (553 aa).

5 consecutive transmembrane segments (helical) span residues 4-24 (IALT…IGNV), 28-48 (GVGL…HFVS), 65-85 (FGLI…FFAS), 95-115 (LFAV…HKLF), and 158-178 (MSYA…MWML). RCK C-terminal domains are found at residues 191-276 (QQHE…VIGQ) and 279-361 (DTSL…VLGN). Helical transmembrane passes span 371-391 (MLPV…PVFV), 393-413 (GFPA…ALIL), 439-459 (IVLF…HTLV), 464-484 (LSWI…VGIL), 493-513 (YLTM…LAFA), and 533-553 (LVMF…WSIG).

This sequence belongs to the AAE transporter (TC 2.A.81) family. YidE subfamily.

It is found in the cell membrane. This is Putative transport protein YidE from Escherichia coli O6:H1 (strain CFT073 / ATCC 700928 / UPEC).